Here is a 541-residue protein sequence, read N- to C-terminus: MAAAIRIRAVAAGARLSVLNCGLGITTRGLCSQPVSVKERIDNKRHAALLGGGQRRIDAQHKRGKLTARERISLLLDPGSFMESDMFVEHRCADFGMAADKNKFPGDSVVTGRGRINGRLVYVFSQDFTVFGGSLSGAHAQKICKIMDQAITVGAPVIGLNDSGGARIQEGVESLAGYADIFLRNVTASGVIPQISLIMGPCAGGAVYSPALTDFTFMVKDTSYLFITGPEVVKSVTNEDVTQEQLGGAKTHTTVSGVAHRAFDNDVDALCNLREFFNFLPLSSQDPAPIRECHDPSDRLVPELDTVVPLESSKAYNMLDIIHAVIDEREFFEIMPSYAKNIVVGFARMNGRTVGIVGNQPNVASGCLDINSSVKGARFVRFCDAFNIPLITFVDVPGFLPGTAQEYGGIIRHGAKLLYAFAEATVPKITVITRKAYGGAYDVMSSKHLLGDTNYAWPTAEIAVMGAKGAVEIIFKGHQDVEAAQAEYVEKFANPFPAAVRGFVDDIIQPSSTRARICCDLEVLASKKVHRPWRKHANIPL.

The N-terminal 28 residues, 1–28 (MAAAIRIRAVAAGARLSVLNCGLGITTR), are a transit peptide targeting the mitochondrion. Residues 34–292 (PVSVKERIDN…SSQDPAPIRE (259 aa)) form the CoA carboxyltransferase N-terminal domain. The tract at residues 34–535 (PVSVKERIDN…SKKVHRPWRK (502 aa)) is carboxyltransferase. Position 73 is a phosphoserine (S73). K101 bears the N6-acetyllysine; alternate mark. K101 bears the N6-succinyllysine; alternate mark. The residue at position 250 (K250) is an N6-succinyllysine. Residues 296–535 (PSDRLVPELD…SKKVHRPWRK (240 aa)) form the CoA carboxyltransferase C-terminal domain. Residues 327-360 (DEREFFEIMPSYAKNIVVGFARMNGRTVGIVGNQ) are acyl-CoA binding. 2 positions are modified to N6-acetyllysine; alternate: K476 and K491. An N6-succinyllysine; alternate mark is found at K476 and K491.

Belongs to the AccD/PCCB family. The holoenzyme is a dodecamer composed of 6 PCCA/alpha subunits and 6 PCCB/beta subunits. In terms of tissue distribution, broadly expressed. Most abundantly expressed in the kidney, liver, small intestine and stomach.

The protein localises to the mitochondrion matrix. It catalyses the reaction propanoyl-CoA + hydrogencarbonate + ATP = (S)-methylmalonyl-CoA + ADP + phosphate + H(+). The enzyme catalyses butanoyl-CoA + hydrogencarbonate + ATP = (2S)-ethylmalonyl-CoA + ADP + phosphate + H(+). Its pathway is metabolic intermediate metabolism; propanoyl-CoA degradation; succinyl-CoA from propanoyl-CoA: step 1/3. In terms of biological role, this is one of the 2 subunits of the biotin-dependent propionyl-CoA carboxylase (PCC), a mitochondrial enzyme involved in the catabolism of odd chain fatty acids, branched-chain amino acids isoleucine, threonine, methionine, and valine and other metabolites. Propionyl-CoA carboxylase catalyzes the carboxylation of propionyl-CoA/propanoyl-CoA to D-methylmalonyl-CoA/(S)-methylmalonyl-CoA. Within the holoenzyme, the alpha subunit catalyzes the ATP-dependent carboxylation of the biotin carried by the biotin carboxyl carrier (BCC) domain, while the beta subunit then transfers the carboxyl group from carboxylated biotin to propionyl-CoA. Propionyl-CoA carboxylase also significantly acts on butyryl-CoA/butanoyl-CoA, which is converted to ethylmalonyl-CoA/(2S)-ethylmalonyl-CoA. Other alternative minor substrates include (2E)-butenoyl-CoA/crotonoyl-CoA. This Mus musculus (Mouse) protein is Propionyl-CoA carboxylase beta chain, mitochondrial.